Here is a 253-residue protein sequence, read N- to C-terminus: MSVVSMKQLLEAGVHFGHQTRRWDPKMKPYIFTQRNDIYIIDLQKTIKMLDDAYNYVKAVAQDDGVFLFVGTKKQAQEAIAEEATRAGQYYVNQRWLGGTLTNWTTIQSRVKRLKDLKKMAEDGTFDVLPKKEVSLLTKEMDKLQKFLGGIEDMPRIPDVMFVVDPKKEKIAVHEANKLGIPVVAMVDTNTDPTPIDVIIPSNDDAIRAIRLIAGTMADAVIEGKQGADNADVEKELSESVEENSAEEVDDAE.

The tract at residues 226–253 (QGADNADVEKELSESVEENSAEEVDDAE) is disordered. Positions 239–253 (ESVEENSAEEVDDAE) are enriched in acidic residues.

Belongs to the universal ribosomal protein uS2 family.

This is Small ribosomal subunit protein uS2 from Lactobacillus delbrueckii subsp. bulgaricus (strain ATCC 11842 / DSM 20081 / BCRC 10696 / JCM 1002 / NBRC 13953 / NCIMB 11778 / NCTC 12712 / WDCM 00102 / Lb 14).